The sequence spans 102 residues: Small ribosomal subunit protein uS10 (102 aa).

Belongs to the universal ribosomal protein uS10 family. In terms of assembly, part of the 30S ribosomal subunit.

In terms of biological role, involved in the binding of tRNA to the ribosomes. The polypeptide is Small ribosomal subunit protein uS10 (Chlorobium phaeobacteroides (strain BS1)).